A 165-amino-acid chain; its full sequence is 2-C-methyl-D-erythritol 2,4-cyclodiphosphate synthase (165 aa).

Residues Asp-12 and His-14 each coordinate a divalent metal cation. Residues 12–14 (DVH) and 38–39 (HS) contribute to the 4-CDP-2-C-methyl-D-erythritol 2-phosphate site. His-46 serves as a coordination point for a divalent metal cation. Residues 60–62 (DIG), 65–69 (FPDTD), Phe-143, and Arg-146 contribute to the 4-CDP-2-C-methyl-D-erythritol 2-phosphate site.

It belongs to the IspF family. Homotrimer. It depends on a divalent metal cation as a cofactor.

It catalyses the reaction 4-CDP-2-C-methyl-D-erythritol 2-phosphate = 2-C-methyl-D-erythritol 2,4-cyclic diphosphate + CMP. Its pathway is isoprenoid biosynthesis; isopentenyl diphosphate biosynthesis via DXP pathway; isopentenyl diphosphate from 1-deoxy-D-xylulose 5-phosphate: step 4/6. Functionally, involved in the biosynthesis of isopentenyl diphosphate (IPP) and dimethylallyl diphosphate (DMAPP), two major building blocks of isoprenoid compounds. Catalyzes the conversion of 4-diphosphocytidyl-2-C-methyl-D-erythritol 2-phosphate (CDP-ME2P) to 2-C-methyl-D-erythritol 2,4-cyclodiphosphate (ME-CPP) with a corresponding release of cytidine 5-monophosphate (CMP). This Aromatoleum aromaticum (strain DSM 19018 / LMG 30748 / EbN1) (Azoarcus sp. (strain EbN1)) protein is 2-C-methyl-D-erythritol 2,4-cyclodiphosphate synthase.